The sequence spans 249 residues: Enolase-phosphatase E1 (249 aa).

It belongs to the HAD-like hydrolase superfamily. MasA/MtnC family. Monomer. It depends on Mg(2+) as a cofactor.

The enzyme catalyses 5-methylsulfanyl-2,3-dioxopentyl phosphate + H2O = 1,2-dihydroxy-5-(methylsulfanyl)pent-1-en-3-one + phosphate. It functions in the pathway amino-acid biosynthesis; L-methionine biosynthesis via salvage pathway; L-methionine from S-methyl-5-thio-alpha-D-ribose 1-phosphate: step 3/6. Its pathway is amino-acid biosynthesis; L-methionine biosynthesis via salvage pathway; L-methionine from S-methyl-5-thio-alpha-D-ribose 1-phosphate: step 4/6. Bifunctional enzyme that catalyzes the enolization of 2,3-diketo-5-methylthiopentyl-1-phosphate (DK-MTP-1-P) into the intermediate 2-hydroxy-3-keto-5-methylthiopentenyl-1-phosphate (HK-MTPenyl-1-P), which is then dephosphorylated to form the acireductone 1,2-dihydroxy-3-keto-5-methylthiopentene (DHK-MTPene). The sequence is that of Enolase-phosphatase E1 from Synechococcus sp. (strain CC9605).